A 468-amino-acid chain; its full sequence is Siroheme synthase 3 (468 aa).

Residues 1–204 (MDYLPIFCRL…GDSASANQLA (204 aa)) form a precorrin-2 dehydrogenase /sirohydrochlorin ferrochelatase region. NAD(+) is bound by residues 22–23 (EV) and 43–44 (PE). At serine 128 the chain carries Phosphoserine. Residues 216–468 (GEVVLVGAGP…GAADAALASA (253 aa)) form a uroporphyrinogen-III C-methyltransferase region. S-adenosyl-L-methionine is bound at residue proline 225. The Proton acceptor role is filled by aspartate 248. Lysine 270 serves as the catalytic Proton donor. Residues 301–303 (GGD), isoleucine 306, 331–332 (TA), methionine 383, and glycine 412 each bind S-adenosyl-L-methionine.

This sequence in the N-terminal section; belongs to the precorrin-2 dehydrogenase / sirohydrochlorin ferrochelatase family. The protein in the C-terminal section; belongs to the precorrin methyltransferase family.

The enzyme catalyses uroporphyrinogen III + 2 S-adenosyl-L-methionine = precorrin-2 + 2 S-adenosyl-L-homocysteine + H(+). It carries out the reaction precorrin-2 + NAD(+) = sirohydrochlorin + NADH + 2 H(+). It catalyses the reaction siroheme + 2 H(+) = sirohydrochlorin + Fe(2+). It functions in the pathway cofactor biosynthesis; adenosylcobalamin biosynthesis; precorrin-2 from uroporphyrinogen III: step 1/1. It participates in cofactor biosynthesis; adenosylcobalamin biosynthesis; sirohydrochlorin from precorrin-2: step 1/1. Its pathway is porphyrin-containing compound metabolism; siroheme biosynthesis; precorrin-2 from uroporphyrinogen III: step 1/1. The protein operates within porphyrin-containing compound metabolism; siroheme biosynthesis; siroheme from sirohydrochlorin: step 1/1. It functions in the pathway porphyrin-containing compound metabolism; siroheme biosynthesis; sirohydrochlorin from precorrin-2: step 1/1. Its function is as follows. Multifunctional enzyme that catalyzes the SAM-dependent methylations of uroporphyrinogen III at position C-2 and C-7 to form precorrin-2 via precorrin-1. Then it catalyzes the NAD-dependent ring dehydrogenation of precorrin-2 to yield sirohydrochlorin. Finally, it catalyzes the ferrochelation of sirohydrochlorin to yield siroheme. The chain is Siroheme synthase 3 from Aeromonas hydrophila subsp. hydrophila (strain ATCC 7966 / DSM 30187 / BCRC 13018 / CCUG 14551 / JCM 1027 / KCTC 2358 / NCIMB 9240 / NCTC 8049).